The primary structure comprises 145 residues: Large ribosomal subunit protein uL15 (145 aa).

The disordered stretch occupies residues 1 to 58 (MFNLLKPKGASKRRKIVGRGPGSGLGKTSGRGQKGQKARNTSPRLGFEGGQTPLYRRL). Over residues 19–33 (RGPGSGLGKTSGRGQ) the composition is skewed to gly residues.

The protein belongs to the universal ribosomal protein uL15 family. As to quaternary structure, part of the 50S ribosomal subunit.

Binds to the 23S rRNA. This chain is Large ribosomal subunit protein uL15, found in Borrelia garinii subsp. bavariensis (strain ATCC BAA-2496 / DSM 23469 / PBi) (Borreliella bavariensis).